The following is a 182-amino-acid chain: Ribosome-recycling factor (182 aa).

It belongs to the RRF family.

The protein resides in the cytoplasm. Responsible for the release of ribosomes from messenger RNA at the termination of protein biosynthesis. May increase the efficiency of translation by recycling ribosomes from one round of translation to another. In Synechococcus sp. (strain JA-2-3B'a(2-13)) (Cyanobacteria bacterium Yellowstone B-Prime), this protein is Ribosome-recycling factor.